A 335-amino-acid polypeptide reads, in one-letter code: Protein-arginine kinase (335 aa).

One can recognise a Phosphagen kinase C-terminal domain in the interval 20 to 243 (IVMSSRIRLA…QQIINEEMQI (224 aa)). Residues 23 to 27 (SSRIR), histidine 81, arginine 114, 165 to 169 (RASVM), and 196 to 201 (RGIYGE) contribute to the ATP site.

Belongs to the ATP:guanido phosphotransferase family.

The catalysed reaction is L-arginyl-[protein] + ATP = N(omega)-phospho-L-arginyl-[protein] + ADP + H(+). Catalyzes the specific phosphorylation of arginine residues in proteins. This chain is Protein-arginine kinase, found in Staphylococcus haemolyticus (strain JCSC1435).